Here is a 557-residue protein sequence, read N- to C-terminus: Urocanate hydratase (557 aa).

NAD(+) is bound by residues 52–53, glutamine 130, 176–178, glutamate 196, arginine 201, 242–243, 263–267, 273–274, and tyrosine 322; these read GG, GMG, NA, QTSAH, and YL. Cysteine 410 is a catalytic residue. Glycine 492 contributes to the NAD(+) binding site.

Belongs to the urocanase family. Requires NAD(+) as cofactor.

The protein resides in the cytoplasm. The enzyme catalyses 4-imidazolone-5-propanoate = trans-urocanate + H2O. The protein operates within amino-acid degradation; L-histidine degradation into L-glutamate; N-formimidoyl-L-glutamate from L-histidine: step 2/3. Catalyzes the conversion of urocanate to 4-imidazolone-5-propionate. This chain is Urocanate hydratase, found in Allorhizobium ampelinum (strain ATCC BAA-846 / DSM 112012 / S4) (Agrobacterium vitis (strain S4)).